The sequence spans 602 residues: Arginine--tRNA ligase (602 aa).

The 'HIGH' region motif lies at 132-142; the sequence is ANPTGPLHVGH.

It belongs to the class-I aminoacyl-tRNA synthetase family. Monomer.

It is found in the cytoplasm. It carries out the reaction tRNA(Arg) + L-arginine + ATP = L-arginyl-tRNA(Arg) + AMP + diphosphate. The sequence is that of Arginine--tRNA ligase from Cupriavidus metallidurans (strain ATCC 43123 / DSM 2839 / NBRC 102507 / CH34) (Ralstonia metallidurans).